A 286-amino-acid polypeptide reads, in one-letter code: Merozoite surface protein 2 (286 aa).

A signal peptide spans 1-20; the sequence is MKVIKTLSIINFFIFVTFNI. N-linked (GlcNAc...) asparagine glycosylation is found at N22 and N36. The interval 43-248 is disordered; sequence MTESKTPTPT…SQKECTDGNK (206 aa). Residues 44 to 212 form a polymorphic region region; sequence TESKTPTPTG…EQTESPELQS (169 aa). Residues 54 to 68 show a composition bias toward gly residues; the sequence is AGAGASGSAGSGDGA. The stretch at 59–68 is repeat 1; sequence SGSAGSGDGA. Residues 59-106 form a 5 X 10 AA tandem repeats of S-G-S-A-[GS]-[GS]-[AD]-G-A region; it reads SGSAGSGDGASGSASGSASGSASGSAGASGSASGSAGASGSASGSAGA. Residues 69-76 form a 2; partial repeat; that stretch reads SGSASGSA. Positions 69-137 are enriched in low complexity; it reads SGSASGSASG…STSTSSENPN (69 aa). 3 consecutive repeat copies span residues 77–86, 88–96, and 97–106. Polar residues-rich tracts occupy residues 153 to 179 and 186 to 214; these read KPNQ…NVPP and KSPT…QSAP. N163 carries N-linked (GlcNAc...) asparagine glycosylation. N-linked (GlcNAc...) asparagine glycosylation is present at N235. The segment covering 239–248 has biased composition (basic and acidic residues); it reads SQKECTDGNK. A disulfide bridge connects residues C243 and C251. N259 and N260 each carry an N-linked (GlcNAc...) asparagine glycan. A lipid anchor (GPI-anchor amidated asparagine) is attached at N260. Residues 261–286 constitute a propeptide, removed in mature form; sequence SSNIASINKFVVLISATLVLSFAIFI.

The protein resides in the cell membrane. In terms of biological role, may play a role in the merozoite attachment to the erythrocyte. The protein is Merozoite surface protein 2 of Plasmodium falciparum (isolate 311).